The primary structure comprises 406 residues: Arginine deiminase (406 aa).

Cys396 functions as the Amidino-cysteine intermediate in the catalytic mechanism.

This sequence belongs to the arginine deiminase family.

Its subcellular location is the cytoplasm. It catalyses the reaction L-arginine + H2O = L-citrulline + NH4(+). The protein operates within amino-acid degradation; L-arginine degradation via ADI pathway; carbamoyl phosphate from L-arginine: step 1/2. The chain is Arginine deiminase from Vibrio vulnificus (strain CMCP6).